The sequence spans 478 residues: Phosphomannomutase (478 aa).

Residues 30-46 (FTPEVCARFTISFLTVM) form a helical membrane-spanning segment. Ser-111 functions as the Phosphoserine intermediate in the catalytic mechanism. Mg(2+)-binding residues include Ser-111, Asp-245, Asp-247, and Asp-249. Residues 265–284 (ILGLLCSLELAADAVAIPVS) traverse the membrane as a helical segment.

This sequence belongs to the phosphohexose mutase family. Mg(2+) is required as a cofactor.

The protein resides in the cell membrane. The enzyme catalyses alpha-D-mannose 1-phosphate = D-mannose 6-phosphate. It functions in the pathway nucleotide-sugar biosynthesis; GDP-alpha-D-mannose biosynthesis; alpha-D-mannose 1-phosphate from D-fructose 6-phosphate: step 2/2. Its pathway is bacterial outer membrane biogenesis; LPS O-antigen biosynthesis. Involved in GDP-mannose biosynthesis which serves as the activated sugar nucleotide precursor for mannose residues in cell surface polysaccharides. This enzyme participates in synthesis of the LPS group C2 O antigen. This chain is Phosphomannomutase (manB), found in Salmonella muenchen.